An 86-amino-acid chain; its full sequence is MDENIKKAEYYYKKGVEVGNKGDVEKALEYFNKAIELNPFYRDAWFNKALALRILGRYEEARECFFRGLAVEKHLTHKKYNSDDEK.

TPR repeat units follow at residues 8-41 (AEYY…NPFY) and 42-75 (RDAW…EKHL).

This is an uncharacterized protein from Methanocaldococcus jannaschii (strain ATCC 43067 / DSM 2661 / JAL-1 / JCM 10045 / NBRC 100440) (Methanococcus jannaschii).